We begin with the raw amino-acid sequence, 437 residues long: Probable receptor-like serine/threonine-protein kinase At4g34500 (437 aa).

Residues Leu-25 to Val-45 form a helical membrane-spanning segment. The Protein kinase domain maps to Phe-145–Arg-426. Residues Ile-151 to Val-159 and Lys-173 each bind ATP. Residue Tyr-220 is modified to Phosphotyrosine. Asp-273 (proton acceptor) is an active-site residue. Position 277 is a phosphoserine (Ser-277). A phosphothreonine mark is found at Thr-307 and Thr-312. Tyr-320 is subject to Phosphotyrosine.

This sequence belongs to the protein kinase superfamily. Ser/Thr protein kinase family.

Its subcellular location is the cell membrane. It carries out the reaction L-seryl-[protein] + ATP = O-phospho-L-seryl-[protein] + ADP + H(+). The catalysed reaction is L-threonyl-[protein] + ATP = O-phospho-L-threonyl-[protein] + ADP + H(+). The sequence is that of Probable receptor-like serine/threonine-protein kinase At4g34500 from Arabidopsis thaliana (Mouse-ear cress).